Consider the following 662-residue polypeptide: Polyunsaturated fatty acid lipoxygenase ALOX15 (662 aa).

The PLAT domain occupies 2–114 (GLYRIRVSTG…VLSLPEGTGR (113 aa)). The Lipoxygenase domain occupies 115 to 662 (TVGDDPQGLF…PSIVENSVAI (548 aa)). The Fe cation site is built by His-360, His-365, His-540, His-544, and Ile-662.

Belongs to the lipoxygenase family. As to quaternary structure, interacts with PEBP1; in response to IL13/interleukin-13, prevents the interaction of PEBP1 with RAF1 to activate the ERK signaling cascade. Fe cation is required as a cofactor.

It is found in the cytoplasm. The protein resides in the cytosol. The protein localises to the cell membrane. It localises to the lipid droplet. The enzyme catalyses (5Z,8Z,11Z,14Z)-eicosatetraenoate + O2 = (12S)-hydroperoxy-(5Z,8Z,10E,14Z)-eicosatetraenoate. It carries out the reaction (9Z,12Z)-octadecadienoate + O2 = (13S)-hydroperoxy-(9Z,11E)-octadecadienoate. The catalysed reaction is (5Z,8Z,11Z,14Z)-eicosatetraenoate + O2 = (15S)-hydroperoxy-(5Z,8Z,11Z,13E)-eicosatetraenoate. It catalyses the reaction (5Z,8Z,11Z,14Z)-eicosatetraenoate + 2 O2 = (14R,15S)-dihydroperoxy-(5Z,8Z,10E,12E)-eicosatetraenoate. The enzyme catalyses (5Z,8Z,11Z,14Z)-eicosatetraenoate + 2 O2 = (8S,15S)-dihydroperoxy-(5Z,9E,11Z,13E)-eicosatetraenoate. It carries out the reaction (14S,15R)-epoxy-(5Z,8Z,11Z)-eicosatrienoate + O2 = (8S)-hydroperoxy-(14S,15R)-epoxy-(5Z,9E,11Z)-eicosatrienoate. The catalysed reaction is (14S,15R)-epoxy-(5Z,8Z,11Z)-eicosatrienoate + O2 = (12S)-hydroperoxy-(14S,15R)-epoxy-(5Z,8Z,10E)-eicosatrienoate. It catalyses the reaction (14R,15S)-epoxy-(5Z,8Z,11Z)-eicosatrienoate + O2 = (5S)-hydroperoxy-(14R,15S)-epoxy-(6E,8Z,11Z)-eicosatrienoate. The enzyme catalyses (14R,15S)-epoxy-(5Z,8Z,11Z)-eicosatrienoate + O2 = (12S)-hydroperoxy-(14R,15S)-epoxy-(5Z,8Z,10E)-eicosatrienoate. It carries out the reaction (15R)-hydroperoxy-(5Z,8Z,11Z,13E)-eicosatetraenoate = 15-oxo-(5Z,8Z,11Z,13E)-eicosatetraenoate + H2O. The catalysed reaction is (15S)-hydroperoxy-(5Z,8Z,11Z,13E)-eicosatetraenoate = (14S,15S)-epoxy-(5Z,8Z,10E,12E)-eicosatetraenoate + H2O. It catalyses the reaction (12S)-hydroperoxy-(5Z,8Z,10E,14Z)-eicosatetraenoate = (8S)-hydroxy-(11S,12S)-epoxy-(5Z,9E,14Z)-eicosatrienoate. The enzyme catalyses (4Z,7Z,10Z,13Z,16Z)-docosapentaenoate + O2 = 14-hydroperoxy-(4Z,7Z,10Z,12E,16Z)-docosapentaenoate. It carries out the reaction (7Z,10Z,13Z,16Z,19Z)-docosapentaenoate + O2 = 14-hydroperoxy-(7Z,10Z,12E,16Z,19Z)-docosapentaenoate. The catalysed reaction is (4Z,7Z,10Z,13Z,16Z,19Z)-docosahexaenoate + O2 = (14S)-hydroperoxy-(4Z,7Z,10Z,12E,16Z,19Z)-docosahexaenoate. It catalyses the reaction (4Z,7Z,10Z,13Z,16Z,19Z)-docosahexaenoate + O2 = (17S)-hydroperoxy-(4Z,7Z,10Z,13Z,15E,19Z)-docosahexaenoate. The enzyme catalyses (7S)-hydroperoxy-(4Z,8E,10Z,13Z,16Z,19Z)-docosahexaenoate + O2 = (7S,14S)-dihydroperoxy-(4Z,8E,10Z,12E,16Z,19Z)-docosahexaenoate. It carries out the reaction (7S)-hydroperoxy-(4Z,8E,10Z,13Z,16Z,19Z)-docosahexaenoate + O2 = (7S,17S)-dihydroperoxy-(4Z,8E,10Z,13Z,15E,19Z)-docosahexaenoate. The catalysed reaction is (4Z,7Z,10Z,13Z,16Z,19Z)-docosahexaenoate + O2 = (11S)-hydroperoxy-(4Z,7Z,9E,13Z,16Z,19Z)-docosahexaenoate. It catalyses the reaction N-(5Z,8Z,11Z,14Z)-eicosatetraenoyl-taurine + O2 = N-(12S)-hydroperoxy-(5Z,8Z,10E,14Z)-eicosatetraenoyl-taurine. The enzyme catalyses N-(5Z,8Z,11Z,14Z)-eicosatetraenoyl-gamma-aminobutanoate + O2 = N-(12S)-hydroperoxy-(5Z,8Z,10E,14Z)-eicosatetraenoyl-gamma-aminobutanoate. It carries out the reaction N-(5Z,8Z,11Z,14Z)-eicosatetraenoyl-glycine + O2 = N-(12S)-hydroperoxy-(5Z,8Z,10E,14Z)-eicosatetraenoyl-glycine. The catalysed reaction is N-(5Z,8Z,11Z,14Z)-eicosatetraenoyl-L-alanine + O2 = N-(12S)-hydroperoxy-(5Z,8Z,10E,14Z)-eicosatetraenoyl-alanine. It catalyses the reaction N-(5Z,8Z,11Z,14Z)-eicosatetraenoyl-taurine + O2 = N-(15S)-hydroperoxy-(5Z,8Z,11Z,13E)-eicosatetraenoyl-taurine. The enzyme catalyses N-(5Z,8Z,11Z,14Z)-eicosatetraenoyl-gamma-aminobutanoate + O2 = N-(15S)-hydroperoxy-(5Z,8Z,11Z,13E)-eicosatetraenoyl-gamma-aminobutanoate. It carries out the reaction N-(5Z,8Z,11Z,14Z)-eicosatetraenoyl-glycine + O2 = N-(15S)-hydroperoxy-(5Z,8Z,11Z,13E)-eicosatetraenoyl-glycine. The catalysed reaction is N-(5Z,8Z,11Z,14Z)-eicosatetraenoyl-L-alanine + O2 = N-(15S)-hydroperoxy-(5Z,8Z,11Z,13E)-eicosatetraenoyl-alanine. It participates in lipid metabolism; hydroperoxy eicosatetraenoic acid biosynthesis. Functionally, non-heme iron-containing dioxygenase that catalyzes the stereo-specific peroxidation of free and esterified polyunsaturated fatty acids generating a spectrum of bioactive lipid mediators. It inserts peroxyl groups at C12 or C15 of arachidonate ((5Z,8Z,11Z,14Z)-eicosatetraenoate) producing both 12-hydroperoxyeicosatetraenoate/12-HPETE and 15-hydroperoxyeicosatetraenoate/15-HPETE. It may then act on 12-HPETE to produce hepoxilins, which may show pro-inflammatory properties. Can also peroxidize linoleate ((9Z,12Z)-octadecadienoate) to 13-hydroperoxyoctadecadienoate. May participate in the sequential oxidations of DHA ((4Z,7Z,10Z,13Z,16Z,19Z)-docosahexaenoate) to generate specialized pro-resolving mediators (SPMs)like resolvin D5 ((7S,17S)-diHPDHA) and (7S,14S)-diHPDHA, that actively down-regulate the immune response and have anti-aggregation properties with platelets. Can convert epoxy fatty acids to hydroperoxy-epoxides derivatives followed by an intramolecular nucleophilic substitution leading to the formation of monocyclic endoperoxides. Plays an important role during the maintenance of self-tolerance by peroxidizing membrane-bound phosphatidylethanolamine which can then signal the sorting process for clearance of apoptotic cells during inflammation and prevent an autoimmune response. In addition to its role in the immune and inflammatory responses, this enzyme may play a role in epithelial wound healing in the cornea through production of lipoxin A4 (LXA(4)) and docosahexaenoic acid-derived neuroprotectin D1 (NPD1; 10R,17S-HDHA), both lipid autacoids exhibit anti-inflammatory and neuroprotective properties. Furthermore, it may regulate actin polymerization which is crucial for several biological processes such as the phagocytosis of apoptotic cells. It is also implicated in the generation of endogenous ligands for peroxisome proliferator activated receptor (PPAR-gamma), hence modulating macrophage development and function. It may also exert a negative effect on skeletal development by regulating bone mass through this pathway. As well as participates in ER stress and downstream inflammation in adipocytes, pancreatic islets, and liver. Finally, it is also involved in the cellular response to IL13/interleukin-13. This chain is Polyunsaturated fatty acid lipoxygenase ALOX15, found in Pongo abelii (Sumatran orangutan).